The chain runs to 565 residues: Urocanate hydratase (565 aa).

Residues 61–62, Gln-139, 185–187, Glu-205, Arg-210, 251–252, 272–276, 282–283, and Tyr-331 contribute to the NAD(+) site; these read GG, GMG, NA, QTSAH, and YL. The active site involves Cys-419. The segment at 453 to 472 is disordered; that stretch reads LDSGSVASPNRETESMRDGS. Residues 463–472 are compositionally biased toward basic and acidic residues; sequence RETESMRDGS. Position 501 (Gly-501) interacts with NAD(+).

This sequence belongs to the urocanase family. NAD(+) serves as cofactor.

It is found in the cytoplasm. The enzyme catalyses 4-imidazolone-5-propanoate = trans-urocanate + H2O. The protein operates within amino-acid degradation; L-histidine degradation into L-glutamate; N-formimidoyl-L-glutamate from L-histidine: step 2/3. Its function is as follows. Catalyzes the conversion of urocanate to 4-imidazolone-5-propionate. This chain is Urocanate hydratase, found in Pseudomonas syringae pv. tomato (strain ATCC BAA-871 / DC3000).